Here is a 128-residue protein sequence, read N- to C-terminus: Anti-sigma-F factor antagonist RsfA (128 aa).

The STAS domain occupies 17–128 (LKATIQHHDS…PTTESALSAT (112 aa)). An intrachain disulfide couples C73 to C109.

The protein belongs to the anti-sigma-factor antagonist family. As to quaternary structure, monomer. Interacts with anti-sigma-F factor RsbW (UsfX).

Positive, redox-sensitive regulator of sigma-F (SigF) activity. When reduced binds to anti-sigma-F factor RsbW (UsfX) preventing its binding to SigF, thus activating transcription. The chain is Anti-sigma-F factor antagonist RsfA (rsfA) from Mycobacterium tuberculosis (strain CDC 1551 / Oshkosh).